The chain runs to 142 residues: Prefoldin subunit alpha 1 (142 aa).

This sequence belongs to the prefoldin subunit alpha family. As to quaternary structure, heterohexamer of two alpha and four beta subunits.

It localises to the cytoplasm. Its function is as follows. Molecular chaperone capable of stabilizing a range of proteins. Seems to fulfill an ATP-independent, HSP70-like function in archaeal de novo protein folding. In Methanocaldococcus jannaschii (strain ATCC 43067 / DSM 2661 / JAL-1 / JCM 10045 / NBRC 100440) (Methanococcus jannaschii), this protein is Prefoldin subunit alpha 1 (pfdA1).